We begin with the raw amino-acid sequence, 136 residues long: MARTKQTARKSTGGKAPRKQLATKAWNTLATATGGVKKPHRFRPGTVALREIRKYQKSTELLIRKLPFQRLVREIAQDFKTDLRFQSSAVAALQEASEAYLVGLFEDTNLCAIHAKRVTIMPKDMQLARRIRGERA.

Residues 1 to 20 form a disordered region; the sequence is MARTKQTARKSTGGKAPRKQ. Lys-5 carries the post-translational modification N6-methylated lysine. N6-acetyllysine; alternate is present on Lys-10. Lys-10 carries the post-translational modification N6-methylated lysine; alternate. Ser-11 bears the Phosphoserine mark. Position 12 is a phosphothreonine (Thr-12). Position 15 is an N6-acetyllysine (Lys-15). N6-acetyllysine; alternate occurs at positions 19 and 24. Residues Lys-19 and Lys-24 each carry the N6-methylated lysine; alternate modification. Position 37 is an N6-methylated lysine (Lys-37).

This sequence belongs to the histone H3 family. As to quaternary structure, the nucleosome is a histone octamer containing two molecules each of H2A, H2B, H3 and H4 assembled in one H3-H4 heterotetramer and two H2A-H2B heterodimers. The octamer wraps approximately 147 bp of DNA. Post-translationally, acetylation is generally linked to gene activation. Can be acetylated to form H3K9ac, H3K14ac, H3K18ac and H3K23ac. H3K9ac could compete with H3K9me and prevent gene silencing. H3K9ac is restricted to euchromatin. Methylated to form mainly H3K4me, H3K9me, H3K18me, H3K23me and H3K36me. H3K4me1/2/3, H3K9me3 and H3K36me1/2/3 are typical marks for euchromatin, whereas heterochromatic chromocenters are enriched in H3K9me1/2. H2BK143ub1 is probably prerequisite for H3K4me. In terms of processing, can be phosphorylated to form H3S10ph and H3T11ph.

The protein localises to the nucleus. It is found in the chromosome. In terms of biological role, core component of nucleosome. Nucleosomes wrap and compact DNA into chromatin, limiting DNA accessibility to the cellular machineries which require DNA as a template. Histones thereby play a central role in transcription regulation, DNA repair, DNA replication and chromosomal stability. DNA accessibility is regulated via a complex set of post-translational modifications of histones, also called histone code, and nucleosome remodeling. The polypeptide is Histone H3.2 (Cichorium intybus (Chicory)).